We begin with the raw amino-acid sequence, 218 residues long: Kappa-scoloptoxin(11)-Ssd1b (218 aa).

An N-terminal signal peptide occupies residues 1–16 (MFYSHLLFFTFTFACS). Residues 17-25 (SSLNRKTKR) constitute a propeptide that is removed on maturation.

Contains 8 disulfide bonds. As to expression, expressed by the venom gland.

The protein resides in the secreted. Its function is as follows. Voltage-gated potassium channel inhibitor. The chain is Kappa-scoloptoxin(11)-Ssd1b from Scolopendra dehaani (Thai centipede).